Reading from the N-terminus, the 501-residue chain is Aldehyde dehydrogenase 1A1 (501 aa).

Serine 2 is subject to N-acetylserine. 2 positions are modified to N6-acetyllysine: lysine 91 and lysine 128. Residues 167-170 (IPWN), 193-196 (KPAE), 226-227 (GP), and 246-247 (GS) contribute to the NAD(+) site. The residue at position 252 (lysine 252) is an N6-acetyllysine. Glutamate 269 acts as the Proton acceptor in catalysis. 269-271 (ELG) contacts NAD(+). Cysteine 303 serves as the catalytic Nucleophile. Residues 336 to 501 (LTPGVSQGPQ…VTIKISQKNS (166 aa)) form a mediates interaction with PRMT3 region. Threonine 337 bears the Phosphothreonine mark. 349-353 (EQYEK) is an NAD(+) binding site. 2 positions are modified to N6-acetyllysine: lysine 353 and lysine 367. Position 400–402 (400–402 (EIF)) interacts with NAD(+). Lysine 410 bears the N6-acetyllysine mark. A Phosphoserine modification is found at serine 413. Lysine 419 and lysine 495 each carry N6-acetyllysine.

The protein belongs to the aldehyde dehydrogenase family. In terms of assembly, homotetramer. Interacts with PRMT3; the interaction is direct, inhibits ALDH1A1 aldehyde dehydrogenase activity and is independent of the methyltransferase activity of PRMT3. In terms of processing, the N-terminus is blocked most probably by acetylation. Expressed in muscle, liver, small intestine, kidney, brain, lung, heart but not detected in erythrocytes (at protein level).

The protein localises to the cytoplasm. The protein resides in the cytosol. Its subcellular location is the cell projection. It is found in the axon. The enzyme catalyses an aldehyde + NAD(+) + H2O = a carboxylate + NADH + 2 H(+). The catalysed reaction is all-trans-retinal + NAD(+) + H2O = all-trans-retinoate + NADH + 2 H(+). It carries out the reaction 9-cis-retinal + NAD(+) + H2O = 9-cis-retinoate + NADH + 2 H(+). It catalyses the reaction 11-cis-retinal + NAD(+) + H2O = 11-cis-retinoate + NADH + 2 H(+). The enzyme catalyses 13-cis-retinal + NAD(+) + H2O = 13-cis-retinoate + NADH + 2 H(+). The catalysed reaction is 3-deoxyglucosone + NAD(+) + H2O = 2-dehydro-3-deoxy-D-gluconate + NADH + 2 H(+). It carries out the reaction (E)-4-hydroxynon-2-enal + NAD(+) + H2O = (E)-4-hydroxynon-2-enoate + NADH + 2 H(+). It catalyses the reaction malonaldehyde + NAD(+) + H2O = 3-oxopropanoate + NADH + 2 H(+). The enzyme catalyses hexanal + NAD(+) + H2O = hexanoate + NADH + 2 H(+). The catalysed reaction is propanal + NAD(+) + H2O = propanoate + NADH + 2 H(+). It carries out the reaction acetaldehyde + NAD(+) + H2O = acetate + NADH + 2 H(+). It catalyses the reaction benzaldehyde + NAD(+) + H2O = benzoate + NADH + 2 H(+). The enzyme catalyses 4-aminobutanal + NAD(+) + H2O = 4-aminobutanoate + NADH + 2 H(+). It participates in cofactor metabolism; retinol metabolism. Cytosolic dehydrogenase that catalyzes the irreversible oxidation of a wide range of aldehydes to their corresponding carboxylic acid. Functions downstream of retinol dehydrogenases and catalyzes the oxidation of retinaldehyde into retinoic acid, the second step in the oxidation of retinol/vitamin A into retinoic acid. This pathway is crucial to control the levels of retinol and retinoic acid, two important molecules which excess can be teratogenic and cytotoxic. Also oxidizes aldehydes resulting from lipid peroxidation like (E)-4-hydroxynon-2-enal/HNE, malonaldehyde and hexanal that form protein adducts and are highly cytotoxic. By participating for instance to the clearance of (E)-4-hydroxynon-2-enal/HNE in the lens epithelium prevents the formation of HNE-protein adducts and lens opacification. Also functions downstream of fructosamine-3-kinase in the fructosamine degradation pathway by catalyzing the oxidation of 3-deoxyglucosone, the carbohydrate product of fructosamine 3-phosphate decomposition, which is itself a potent glycating agent that may react with lysine and arginine side-chains of proteins. Also has an aminobutyraldehyde dehydrogenase activity and is probably part of an alternative pathway for the biosynthesis of GABA/4-aminobutanoate in midbrain, thereby playing a role in GABAergic synaptic transmission. The polypeptide is Aldehyde dehydrogenase 1A1 (Bos taurus (Bovine)).